The chain runs to 103 residues: Large ribosomal subunit protein bL21 (103 aa).

It belongs to the bacterial ribosomal protein bL21 family. In terms of assembly, part of the 50S ribosomal subunit. Contacts protein L20.

In terms of biological role, this protein binds to 23S rRNA in the presence of protein L20. In Idiomarina loihiensis (strain ATCC BAA-735 / DSM 15497 / L2-TR), this protein is Large ribosomal subunit protein bL21.